Reading from the N-terminus, the 624-residue chain is Cell pattern formation-associated protein ust1 (624 aa).

Disordered regions lie at residues 1–24 (MSTA…APTG) and 43–99 (RSGS…GHSS). Low complexity predominate over residues 43–62 (RSGSVPASASGSAPGSASGS). A compositionally biased stretch (basic residues) spans 70-85 (QHHTGHHHYSAHHTHS). An HTH APSES-type domain is found at 233-339 (RVTTTLWEDE…PNIQSFLYHP (107 aa)). Residues 267–288 (GTKLLNVCGMSRGKRDGILKNE) constitute a DNA-binding region (H-T-H motif). Over residues 352-362 (AQERQAQRQRA) the composition is skewed to low complexity. Disordered regions lie at residues 352 to 456 (AQER…QQQQ), 474 to 504 (QQAY…LNNS), and 538 to 624 (SWND…IHHE). Residues 369–391 (PGANGTSQAPPLMRANTTPSNGD) show a composition bias toward polar residues. The segment covering 392 to 426 (TSTFSSGLSSLGSWTGSHDQGHASAPTTAQPSPSS) has biased composition (low complexity). Over residues 427-451 (MHNGATQMHMSLSNHGTASPTYAQS) the composition is skewed to polar residues. The span at 571-587 (LDGDDLHSPDSSDDRLA) shows a compositional bias: basic and acidic residues. Residues 615 to 624 (VGNGSGIHHE) show a composition bias toward gly residues.

This sequence belongs to the EFG1/PHD1/stuA family. In terms of processing, phosphorylated but is not a target of cAMP signaling.

It is found in the nucleus. In terms of biological role, transcription factor that regulates asexual reproduction. Binds the StuA-response elements (StRE) with the consensus sequence 5'-(A/T)CGCG(T/A)N(A/C)-3' at the promoters of target genes. Regulates dimorphism, virulence, and the sporulation program. Required for mating, gall induction, and sporogenesis in maize tissue. Regulates expression of the filament-down-regulated gene UM00205 and the teliospore-specific gene ssp1. The polypeptide is Cell pattern formation-associated protein ust1 (ust1) (Mycosarcoma maydis (Corn smut fungus)).